The chain runs to 385 residues: Probable splicing factor YJU2B (385 aa).

Residues 1–26 (MGERKGQNKYYPPDFNPEKHGSLNRY) are disordered. A Phosphoserine modification is found at serine 40. Positions 182–215 (LNSMLRRHFREKKKAMQEEEEKDQALQAKANLAI) form a coiled coil. Positions 256-385 (FPSAQGPSTS…VADYSDSESE (130 aa)) are disordered. Residues 260-270 (QGPSTSSSKAS) are compositionally biased toward polar residues. A Phosphoserine modification is found at serine 306. Composition is skewed to polar residues over residues 307-316 (PQCTADNSLS) and 359-373 (GSSQ…TPNA).

The protein belongs to the CWC16 family.

It is found in the nucleus. May be involved in mRNA splicing. In Rattus norvegicus (Rat), this protein is Probable splicing factor YJU2B.